We begin with the raw amino-acid sequence, 229 residues long: Uracil-DNA glycosylase (229 aa).

Aspartate 71 (proton acceptor) is an active-site residue.

Belongs to the uracil-DNA glycosylase (UDG) superfamily. UNG family.

Its subcellular location is the cytoplasm. It catalyses the reaction Hydrolyzes single-stranded DNA or mismatched double-stranded DNA and polynucleotides, releasing free uracil.. In terms of biological role, excises uracil residues from the DNA which can arise as a result of misincorporation of dUMP residues by DNA polymerase or due to deamination of cytosine. This chain is Uracil-DNA glycosylase, found in Campylobacter lari (strain RM2100 / D67 / ATCC BAA-1060).